A 170-amino-acid chain; its full sequence is Ecotin (170 aa).

Residues 1–21 form the signal peptide; the sequence is MNKASVVFSGLLMAVSASAIA. Residues Cys-78 and Cys-115 are joined by a disulfide bond.

This sequence belongs to the protease inhibitor I11 (ecotin) family. In terms of assembly, homodimer.

It localises to the periplasm. In terms of biological role, general inhibitor of pancreatic serine proteases: inhibits chymotrypsin, trypsin, elastases, factor X, kallikrein as well as a variety of other proteases. The protein is Ecotin of Serratia proteamaculans (strain 568).